The primary structure comprises 450 residues: ATP-dependent protease ATPase subunit HslU (450 aa).

Residues V29, 71–76 (GVGKTE), D261, E328, and R400 each bind ATP.

It belongs to the ClpX chaperone family. HslU subfamily. A double ring-shaped homohexamer of HslV is capped on each side by a ring-shaped HslU homohexamer. The assembly of the HslU/HslV complex is dependent on binding of ATP.

The protein resides in the cytoplasm. ATPase subunit of a proteasome-like degradation complex; this subunit has chaperone activity. The binding of ATP and its subsequent hydrolysis by HslU are essential for unfolding of protein substrates subsequently hydrolyzed by HslV. HslU recognizes the N-terminal part of its protein substrates and unfolds these before they are guided to HslV for hydrolysis. The chain is ATP-dependent protease ATPase subunit HslU from Rickettsia felis (strain ATCC VR-1525 / URRWXCal2) (Rickettsia azadi).